The chain runs to 716 residues: Translation initiation factor IF-2 (716 aa).

Residues 50–136 form a disordered region; it reads YKKGGARAKS…VKPKKELPEK (87 aa). A compositionally biased stretch (polar residues) spans 62-84; it reads PAETNKNKQPQGVNQQSAGNQPN. Over residues 101-113 the composition is skewed to basic residues; that stretch reads KNKKNNNNKKNKR. Residues 114-126 are compositionally biased toward low complexity; sequence NNNNNKNQHQQKP. In terms of domain architecture, tr-type G spans 217-386; that stretch reads IRPPVVTIMG…LLVSEVEELK (170 aa). The interval 226 to 233 is G1; it reads GHVDHGKT. Residue 226-233 participates in GTP binding; that stretch reads GHVDHGKT. Positions 251 to 255 are G2; the sequence is GITQH. Positions 272 to 275 are G3; sequence DTPG. GTP-binding positions include 272-276 and 326-329; these read DTPGH and NKID. Residues 326–329 are G4; the sequence is NKID. The G5 stretch occupies residues 362–364; sequence SAL.

Belongs to the TRAFAC class translation factor GTPase superfamily. Classic translation factor GTPase family. IF-2 subfamily.

Its subcellular location is the cytoplasm. Functionally, one of the essential components for the initiation of protein synthesis. Protects formylmethionyl-tRNA from spontaneous hydrolysis and promotes its binding to the 30S ribosomal subunits. Also involved in the hydrolysis of GTP during the formation of the 70S ribosomal complex. This Bacillus subtilis (strain 168) protein is Translation initiation factor IF-2 (infB).